A 273-amino-acid polypeptide reads, in one-letter code: 2-dehydro-3-deoxyphosphooctonate aldolase (273 aa).

This sequence belongs to the KdsA family.

Its subcellular location is the cytoplasm. The catalysed reaction is D-arabinose 5-phosphate + phosphoenolpyruvate + H2O = 3-deoxy-alpha-D-manno-2-octulosonate-8-phosphate + phosphate. Its pathway is carbohydrate biosynthesis; 3-deoxy-D-manno-octulosonate biosynthesis; 3-deoxy-D-manno-octulosonate from D-ribulose 5-phosphate: step 2/3. It participates in bacterial outer membrane biogenesis; lipopolysaccharide biosynthesis. This is 2-dehydro-3-deoxyphosphooctonate aldolase from Nitratidesulfovibrio vulgaris (strain DP4) (Desulfovibrio vulgaris).